The primary structure comprises 342 residues: Galactose mutarotase (342 aa).

Position 14 is a phosphoserine (Ser-14). Beta-D-galactose contacts are provided by residues 81–82 and His-107; that span reads NR. A Phosphoserine modification is found at Ser-124. His-176 serves as the catalytic Proton donor. Residues 176 to 178, Asp-243, Gln-279, and Glu-307 contribute to the beta-D-galactose site; that span reads HSY. The active-site Proton acceptor is the Glu-307.

Belongs to the aldose epimerase family. In terms of assembly, monomer.

Its subcellular location is the cytoplasm. It catalyses the reaction alpha-D-galactose = beta-D-galactose. It carries out the reaction alpha-D-glucose = beta-D-glucose. Its pathway is carbohydrate metabolism; hexose metabolism. The protein operates within carbohydrate metabolism; galactose metabolism. Mutarotase that catalyzes the interconversion of beta-D-galactose and alpha-D-galactose during galactose metabolism. Beta-D-galactose is metabolized in the liver into glucose 1-phosphate, the primary metabolic fuel, by the action of four enzymes that constitute the Leloir pathway: GALM, GALK1 (galactokinase), GALT (galactose-1-phosphate uridylyltransferase) and GALE (UDP-galactose-4'-epimerase). Involved in the maintenance of the equilibrium between the beta- and alpha-anomers of galactose, therefore ensuring a sufficient supply of the alpha-anomer for GALK1. Also active on D-glucose although shows a preference for galactose over glucose. The chain is Galactose mutarotase (Galm) from Rattus norvegicus (Rat).